The chain runs to 239 residues: 1-(5-phosphoribosyl)-5-[(5-phosphoribosylamino)methylideneamino] imidazole-4-carboxamide isomerase (239 aa).

Asp8 serves as the catalytic Proton acceptor. Asp129 serves as the catalytic Proton donor.

It belongs to the HisA/HisF family.

It is found in the cytoplasm. It carries out the reaction 1-(5-phospho-beta-D-ribosyl)-5-[(5-phospho-beta-D-ribosylamino)methylideneamino]imidazole-4-carboxamide = 5-[(5-phospho-1-deoxy-D-ribulos-1-ylimino)methylamino]-1-(5-phospho-beta-D-ribosyl)imidazole-4-carboxamide. It functions in the pathway amino-acid biosynthesis; L-histidine biosynthesis; L-histidine from 5-phospho-alpha-D-ribose 1-diphosphate: step 4/9. The protein is 1-(5-phosphoribosyl)-5-[(5-phosphoribosylamino)methylideneamino] imidazole-4-carboxamide isomerase of Bacillus cereus (strain AH187).